The primary structure comprises 856 residues: Inactive rhomboid protein 1 (856 aa).

Residues 1 to 21 (MGEARRDSSSSLQHKKPPWLK) are disordered. At 1–412 (MGEARRDSSS…HRPFFTYWLT (412 aa)) the chain is on the cytoplasmic side. Phosphoserine occurs at positions 76 and 176. A phosphothreonine mark is found at Thr-180 and Thr-183. Ser-391 bears the Phosphoserine mark. A helical membrane pass occupies residues 413–433 (FVHSLVTILAVCIYGVAPVGF). Residues 434–656 (SQHETVDSVL…NPEVPDQFYR (223 aa)) lie on the Lumenal side of the membrane. Residue Asn-584 is glycosylated (N-linked (GlcNAc...) asparagine). The helical transmembrane segment at 657–677 (LWLSLFLHAGVLHCLVSVCFQ) threads the bilayer. Topologically, residues 678 to 692 (MTVLRDLEKLAGWHR) are cytoplasmic. Residues 693-713 (IAIIYLLSGVTGNLASAIFLP) form a helical membrane-spanning segment. The Lumenal segment spans residues 714 to 715 (YR). Residues 716-736 (AEVGPAGSQFGILACLFVELF) form a helical membrane-spanning segment. The Cytoplasmic segment spans residues 737-747 (QSWQILARPWR). Residues 748-768 (AFFKLLAVVLFLFTFGLLPWI) form a helical membrane-spanning segment. Over 769–773 (DNFAH) the chain is Lumenal. Residues 774 to 794 (ISGFISGLFLSFAFLPYISFG) traverse the membrane as a helical segment. The Cytoplasmic portion of the chain corresponds to 795 to 804 (KFDLYRKRCQ). Residues 805 to 825 (IIVFQLVFLGLLAGLVVLFYF) traverse the membrane as a helical segment. Over 826–856 (YPVRCEWCEFLTCIPFTDKFCEKYELDAQLH) the chain is Lumenal.

It belongs to the peptidase S54 family. Homodimer, or homooligomer. Interacts with TGFA and HBEGF. Interacts with EGF; may retain EGF in the endoplasmic reticulum and regulates its degradation through the endoplasmic reticulum-associated degradation (ERAD). Interacts (via cytoplasmic N-terminus) with FRMD8/iTAP; this interaction leads to mutual protein stabilization. Interacts with ADAM17/TACE.

The protein resides in the endoplasmic reticulum membrane. It is found in the golgi apparatus membrane. Regulates ADAM17 protease, a sheddase of the epidermal growth factor (EGF) receptor ligands and TNF, thereby plays a role in sleep, cell survival, proliferation, migration and inflammation. Does not exhibit any protease activity on its own. This is Inactive rhomboid protein 1 (RHBDF1) from Bos taurus (Bovine).